The sequence spans 226 residues: UPF0758 protein GWCH70_2550 (226 aa).

Residues 104-226 form the MPN domain; the sequence is VIRSPEDGAK…FVSLKEKGYV (123 aa). Zn(2+) contacts are provided by H175, H177, and D188. The JAMM motif signature appears at 175 to 188; the sequence is HNHPSGDPTPSRED.

The protein belongs to the UPF0758 family.

This is UPF0758 protein GWCH70_2550 from Geobacillus sp. (strain WCH70).